Here is a 447-residue protein sequence, read N- to C-terminus: UPF0210 protein lhv_0606 (447 aa).

Belongs to the UPF0210 family. Homodimer.

The protein is UPF0210 protein lhv_0606 of Lactobacillus helveticus (strain DPC 4571).